A 401-amino-acid polypeptide reads, in one-letter code: Imidazolonepropionase (401 aa).

Residues histidine 66 and histidine 68 each contribute to the Fe(3+) site. Histidine 66 and histidine 68 together coordinate Zn(2+). Positions 75, 138, and 171 each coordinate 4-imidazolone-5-propanoate. Residue tyrosine 138 coordinates N-formimidoyl-L-glutamate. Histidine 236 provides a ligand contact to Fe(3+). Histidine 236 is a binding site for Zn(2+). Residue glutamine 239 coordinates 4-imidazolone-5-propanoate. Position 311 (aspartate 311) interacts with Fe(3+). Aspartate 311 is a Zn(2+) binding site. Asparagine 313 and glycine 315 together coordinate N-formimidoyl-L-glutamate. Threonine 316 is a 4-imidazolone-5-propanoate binding site.

It belongs to the metallo-dependent hydrolases superfamily. HutI family. It depends on Zn(2+) as a cofactor. Fe(3+) is required as a cofactor.

It is found in the cytoplasm. The catalysed reaction is 4-imidazolone-5-propanoate + H2O = N-formimidoyl-L-glutamate. It functions in the pathway amino-acid degradation; L-histidine degradation into L-glutamate; N-formimidoyl-L-glutamate from L-histidine: step 3/3. Catalyzes the hydrolytic cleavage of the carbon-nitrogen bond in imidazolone-5-propanoate to yield N-formimidoyl-L-glutamate. It is the third step in the universal histidine degradation pathway. This is Imidazolonepropionase from Acinetobacter baumannii (strain AB307-0294).